Consider the following 319-residue polypeptide: UDP-3-O-acylglucosamine N-acyltransferase (319 aa).

The active-site Proton acceptor is the His-230.

It belongs to the transferase hexapeptide repeat family. LpxD subfamily. Homotrimer.

It catalyses the reaction a UDP-3-O-[(3R)-3-hydroxyacyl]-alpha-D-glucosamine + a (3R)-hydroxyacyl-[ACP] = a UDP-2-N,3-O-bis[(3R)-3-hydroxyacyl]-alpha-D-glucosamine + holo-[ACP] + H(+). It participates in bacterial outer membrane biogenesis; LPS lipid A biosynthesis. Functionally, catalyzes the N-acylation of UDP-3-O-acylglucosamine using 3-hydroxyacyl-ACP as the acyl donor. Is involved in the biosynthesis of lipid A, a phosphorylated glycolipid that anchors the lipopolysaccharide to the outer membrane of the cell. The protein is UDP-3-O-acylglucosamine N-acyltransferase of Campylobacter lari (strain RM2100 / D67 / ATCC BAA-1060).